Reading from the N-terminus, the 38-residue chain is Large ribosomal subunit protein bL36 (38 aa).

The protein belongs to the bacterial ribosomal protein bL36 family.

The polypeptide is Large ribosomal subunit protein bL36 (Streptococcus agalactiae serotype III (strain NEM316)).